A 286-amino-acid chain; its full sequence is Homoserine kinase (286 aa).

Position 78–88 (78–88) interacts with ATP; it reads PLARGLGSSSS.

It belongs to the GHMP kinase family. Homoserine kinase subfamily.

It localises to the cytoplasm. It carries out the reaction L-homoserine + ATP = O-phospho-L-homoserine + ADP + H(+). The protein operates within amino-acid biosynthesis; L-threonine biosynthesis; L-threonine from L-aspartate: step 4/5. Catalyzes the ATP-dependent phosphorylation of L-homoserine to L-homoserine phosphate. The protein is Homoserine kinase of Streptococcus suis (strain 98HAH33).